Here is a 104-residue protein sequence, read N- to C-terminus: UPF0212 protein PH1312 (104 aa).

This sequence belongs to the UPF0212 family.

This Pyrococcus horikoshii (strain ATCC 700860 / DSM 12428 / JCM 9974 / NBRC 100139 / OT-3) protein is UPF0212 protein PH1312.